Reading from the N-terminus, the 239-residue chain is Trimethylguanosine synthase (239 aa).

It belongs to the methyltransferase superfamily. Trimethylguanosine synthase family. In terms of assembly, monomer. Interacts with mug174; both proteins are required to maintain Cajal body integrity.

The protein localises to the nucleus. It is found in the cajal body. It carries out the reaction a 5'-end (N(7)-methyl 5'-triphosphoguanosine)-ribonucleoside in snRNA + S-adenosyl-L-methionine = a 5'-end (N(2),N(7)-dimethyl 5'-triphosphoguanosine)-ribonucleoside in snRNA + S-adenosyl-L-homocysteine + H(+). The catalysed reaction is a 5'-end (N(7)-methyl 5'-triphosphoguanosine)-ribonucleoside in snoRNA + S-adenosyl-L-methionine = a 5'-end (N(2),N(7)-dimethyl 5'-triphosphoguanosine)-ribonucleoside in snoRNA + S-adenosyl-L-homocysteine + H(+). The enzyme catalyses a 5'-end (N(2),N(7)-dimethyl 5'-triphosphoguanosine)-ribonucleoside in snRNA + S-adenosyl-L-methionine = a 5'-end (N(2),N(2),N(7)-trimethyl 5'-triphosphoguanosine)-ribonucleoside in snRNA + S-adenosyl-L-homocysteine + H(+). It catalyses the reaction a 5'-end (N(2),N(7)-dimethyl 5'-triphosphoguanosine)-ribonucleoside in snoRNA + S-adenosyl-L-methionine = a 5'-end (N(2),N(2),N(7)-trimethyl 5'-triphosphoguanosine)-ribonucleoside in snoRNA + S-adenosyl-L-homocysteine + H(+). With respect to regulation, substrate inhibited by S-adenosyl-L-homocysteine. Functionally, catalyzes the two serial methylation steps for the conversion of the 7-monomethylguanosine (m(7)G) caps of snRNAs and snoRNAs to a 2,2,7-trimethylguanosine (m(2,2,7)G) cap structure. The enzyme is specific for guanine, and N7 methylation must precede N2 methylation. Required for pre-mRNA splicing, pre-rRNA processing and small ribosomal subunit synthesis. Involved in nucleolar structural organization. The chain is Trimethylguanosine synthase (tgs1) from Schizosaccharomyces pombe (strain 972 / ATCC 24843) (Fission yeast).